A 975-amino-acid polypeptide reads, in one-letter code: NLR family member X1 (975 aa).

A mitochondrion-targeting transit peptide spans 1–86 (MRWGHHLPRA…EAIQRHRRNL (86 aa)). The interval 75-556 (ATEAIQRHRR…RALPLLFNLI (482 aa)) is required for interaction with MAVS. One can recognise an NACHT domain in the interval 160-483 (QTVVLYGTVG…LRFFLAPCVE (324 aa)). Residue 166-173 (GTVGTGKS) coordinates ATP. A required for the repression of MAVS-induced interferon signaling region spans residues 556-974 (IKVVPRVFGR…ALLEQLGSSG (419 aa)). The 28-residue stretch at 667 to 694 (RQVLPPSELLDHLFFHYEFQNQRFSAEV) folds into the LRRNT domain. 8 LRR repeats span residues 695 to 718 (LSSL…VVAA), 724 to 747 (RHAL…TLLP), 749 to 777 (FLRA…LLHD), 778 to 801 (QCQI…VLME), 811 to 834 (HLSL…LDRN), 835 to 857 (RQLQ…ALAR), 858 to 877 (AARE…ELSS), and 878 to 899 (EGRQ…VVVS). In terms of domain architecture, LRRCT spans 906–970 (VSEYWSVILS…GEVRALLEQL (65 aa)).

Belongs to the NLRP family. In terms of assembly, homohexamer. Interacts with MAVS. Interacts with TUFM. (Microbial infection) Interacts with influenza A virus protein PB1-F2. Ubiquitously expressed. Strongest expression in mammary gland, heart and muscle. Detected in HeLa, HEK293T, THP-1, HL-60, Raji and Jurkat cell lines (at protein level).

Its subcellular location is the mitochondrion outer membrane. In terms of biological role, participates in antiviral signaling. Acts as a negative regulator of MAVS-mediated antiviral responses, through the inhibition of the virus-induced RLH (RIG-like helicase)-MAVS interaction. Instead, promotes autophagy by interacting with TUFM and subsequently recruiting the autophagy-related proteins ATG5 and ATG12. Also regulates MAVS-dependent NLRP3 inflammasome activation to attenuate apoptosis. Has no inhibitory function on NF-kappa-B signaling pathway, but enhances NF-kappa-B and JUN N-terminal kinase dependent signaling through the production of reactive oxygen species. Regulates viral mediated-inflammation and energy metabolism in a sex-dependent manner. In females, prevents uncontrolled inflammation and energy metabolism and thus, may contribute to the sex differences observed in infectious and inflammatory diseases. The polypeptide is NLR family member X1 (NLRX1) (Homo sapiens (Human)).